The sequence spans 457 residues: Cysteine--tRNA ligase (457 aa).

Cys30 lines the Zn(2+) pocket. Residues 32–42 (PTVYDRAHLGN) carry the 'HIGH' region motif. Positions 213, 238, and 242 each coordinate Zn(2+). The short motif at 271–275 (KMSKS) is the 'KMSKS' region element. ATP is bound at residue Lys274.

The protein belongs to the class-I aminoacyl-tRNA synthetase family. In terms of assembly, monomer. Requires Zn(2+) as cofactor.

The protein localises to the cytoplasm. It carries out the reaction tRNA(Cys) + L-cysteine + ATP = L-cysteinyl-tRNA(Cys) + AMP + diphosphate. The sequence is that of Cysteine--tRNA ligase from Ruegeria sp. (strain TM1040) (Silicibacter sp.).